Consider the following 146-residue polypeptide: Large ribosomal subunit protein mL41 (146 aa).

A mitochondrion-targeting transit peptide spans 1–16 (MKGSPISQFSKTSINA).

It belongs to the mitochondrion-specific ribosomal protein mL41 family. Component of the mitochondrial large ribosomal subunit (mt-LSU). Mature yeast 74S mitochondrial ribosomes consist of a small (37S) and a large (54S) subunit. The 37S small subunit contains a 15S ribosomal RNA (15S mt-rRNA) and 34 different proteins. The 54S large subunit contains a 21S rRNA (21S mt-rRNA) and 46 different proteins.

It is found in the mitochondrion. Functionally, component of the mitochondrial ribosome (mitoribosome), a dedicated translation machinery responsible for the synthesis of mitochondrial genome-encoded proteins, including at least some of the essential transmembrane subunits of the mitochondrial respiratory chain. The mitoribosomes are attached to the mitochondrial inner membrane and translation products are cotranslationally integrated into the membrane. The protein is Large ribosomal subunit protein mL41 (MRPL27) of Saccharomyces cerevisiae (strain ATCC 204508 / S288c) (Baker's yeast).